Here is a 101-residue protein sequence, read N- to C-terminus: NADH-quinone oxidoreductase subunit K (101 aa).

3 helical membrane passes run 4 to 24, 29 to 49, and 61 to 81; these read LSDY…GIFV, IITL…NFVA, and IFVF…LAIL.

The protein belongs to the complex I subunit 4L family. NDH-1 is composed of 14 different subunits. Subunits NuoA, H, J, K, L, M, N constitute the membrane sector of the complex.

The protein resides in the cell inner membrane. The catalysed reaction is a quinone + NADH + 5 H(+)(in) = a quinol + NAD(+) + 4 H(+)(out). In terms of biological role, NDH-1 shuttles electrons from NADH, via FMN and iron-sulfur (Fe-S) centers, to quinones in the respiratory chain. The immediate electron acceptor for the enzyme in this species is believed to be ubiquinone. Couples the redox reaction to proton translocation (for every two electrons transferred, four hydrogen ions are translocated across the cytoplasmic membrane), and thus conserves the redox energy in a proton gradient. The protein is NADH-quinone oxidoreductase subunit K of Ruthia magnifica subsp. Calyptogena magnifica.